The following is a 236-amino-acid chain: Ubiquinone biosynthesis O-methyltransferase (236 aa).

S-adenosyl-L-methionine contacts are provided by R36, G60, D81, and L123.

It belongs to the methyltransferase superfamily. UbiG/COQ3 family.

The catalysed reaction is a 3-demethylubiquinol + S-adenosyl-L-methionine = a ubiquinol + S-adenosyl-L-homocysteine + H(+). The enzyme catalyses a 3-(all-trans-polyprenyl)benzene-1,2-diol + S-adenosyl-L-methionine = a 2-methoxy-6-(all-trans-polyprenyl)phenol + S-adenosyl-L-homocysteine + H(+). It functions in the pathway cofactor biosynthesis; ubiquinone biosynthesis. Functionally, O-methyltransferase that catalyzes the 2 O-methylation steps in the ubiquinone biosynthetic pathway. In Rickettsia canadensis (strain McKiel), this protein is Ubiquinone biosynthesis O-methyltransferase.